The following is a 232-amino-acid chain: Ubiquinone biosynthesis O-methyltransferase (232 aa).

S-adenosyl-L-methionine contacts are provided by Arg36, Gly55, Asp76, and Leu120.

The protein belongs to the methyltransferase superfamily. UbiG/COQ3 family.

The enzyme catalyses a 3-demethylubiquinol + S-adenosyl-L-methionine = a ubiquinol + S-adenosyl-L-homocysteine + H(+). It catalyses the reaction a 3-(all-trans-polyprenyl)benzene-1,2-diol + S-adenosyl-L-methionine = a 2-methoxy-6-(all-trans-polyprenyl)phenol + S-adenosyl-L-homocysteine + H(+). Its pathway is cofactor biosynthesis; ubiquinone biosynthesis. Functionally, O-methyltransferase that catalyzes the 2 O-methylation steps in the ubiquinone biosynthetic pathway. The chain is Ubiquinone biosynthesis O-methyltransferase from Pseudomonas putida (strain ATCC 700007 / DSM 6899 / JCM 31910 / BCRC 17059 / LMG 24140 / F1).